A 62-amino-acid polypeptide reads, in one-letter code: Photosystem II reaction center protein Z (62 aa).

2 consecutive transmembrane segments (helical) span residues 8-28 (AVFA…VVFA) and 41-61 (FSGT…NSLI).

This sequence belongs to the PsbZ family. PSII is composed of 1 copy each of membrane proteins PsbA, PsbB, PsbC, PsbD, PsbE, PsbF, PsbH, PsbI, PsbJ, PsbK, PsbL, PsbM, PsbT, PsbY, PsbZ, Psb30/Ycf12, at least 3 peripheral proteins of the oxygen-evolving complex and a large number of cofactors. It forms dimeric complexes.

The protein resides in the plastid. It is found in the chloroplast thylakoid membrane. Functionally, may control the interaction of photosystem II (PSII) cores with the light-harvesting antenna, regulates electron flow through the 2 photosystem reaction centers. PSII is a light-driven water plastoquinone oxidoreductase, using light energy to abstract electrons from H(2)O, generating a proton gradient subsequently used for ATP formation. The polypeptide is Photosystem II reaction center protein Z (Glycine max (Soybean)).